Reading from the N-terminus, the 92-residue chain is Small ribosomal subunit protein uS19c (92 aa).

This sequence belongs to the universal ribosomal protein uS19 family.

The protein localises to the plastid. It is found in the chloroplast. Functionally, protein S19 forms a complex with S13 that binds strongly to the 16S ribosomal RNA. This chain is Small ribosomal subunit protein uS19c, found in Morus indica (Mulberry).